The chain runs to 476 residues: Bifunctional protein HldE (476 aa).

The interval 1 to 318 is ribokinase; sequence MAQYSAEFKQ…ENAIHARPET (318 aa). 195-198 contacts ATP; sequence NMSE. The active site involves Asp-264. Positions 344–476 are cytidylyltransferase; the sequence is MTNGCFDILH…VIEKIKLLKD (133 aa).

It in the N-terminal section; belongs to the carbohydrate kinase PfkB family. The protein in the C-terminal section; belongs to the cytidylyltransferase family. In terms of assembly, homodimer.

It catalyses the reaction D-glycero-beta-D-manno-heptose 7-phosphate + ATP = D-glycero-beta-D-manno-heptose 1,7-bisphosphate + ADP + H(+). It carries out the reaction D-glycero-beta-D-manno-heptose 1-phosphate + ATP + H(+) = ADP-D-glycero-beta-D-manno-heptose + diphosphate. It functions in the pathway nucleotide-sugar biosynthesis; ADP-L-glycero-beta-D-manno-heptose biosynthesis; ADP-L-glycero-beta-D-manno-heptose from D-glycero-beta-D-manno-heptose 7-phosphate: step 1/4. The protein operates within nucleotide-sugar biosynthesis; ADP-L-glycero-beta-D-manno-heptose biosynthesis; ADP-L-glycero-beta-D-manno-heptose from D-glycero-beta-D-manno-heptose 7-phosphate: step 3/4. Its pathway is bacterial outer membrane biogenesis; LOS core biosynthesis. Functionally, catalyzes the phosphorylation of D-glycero-D-manno-heptose 7-phosphate at the C-1 position to selectively form D-glycero-beta-D-manno-heptose-1,7-bisphosphate. Its function is as follows. Catalyzes the ADP transfer from ATP to D-glycero-beta-D-manno-heptose 1-phosphate, yielding ADP-D-glycero-beta-D-manno-heptose. The chain is Bifunctional protein HldE from Haemophilus influenzae (strain ATCC 51907 / DSM 11121 / KW20 / Rd).